Reading from the N-terminus, the 429-residue chain is UDP-N-acetylglucosamine 1-carboxyvinyltransferase 2 (429 aa).

22-23 (KN) contributes to the phosphoenolpyruvate binding site. UDP-N-acetyl-alpha-D-glucosamine is bound at residue R92. Catalysis depends on C116, which acts as the Proton donor. 2-(S-cysteinyl)pyruvic acid O-phosphothioketal is present on C116. Residues 121 to 125 (RPIDQ), D305, and I327 each bind UDP-N-acetyl-alpha-D-glucosamine.

It belongs to the EPSP synthase family. MurA subfamily.

The protein resides in the cytoplasm. It catalyses the reaction phosphoenolpyruvate + UDP-N-acetyl-alpha-D-glucosamine = UDP-N-acetyl-3-O-(1-carboxyvinyl)-alpha-D-glucosamine + phosphate. The protein operates within cell wall biogenesis; peptidoglycan biosynthesis. Cell wall formation. Adds enolpyruvyl to UDP-N-acetylglucosamine. The protein is UDP-N-acetylglucosamine 1-carboxyvinyltransferase 2 of Bacillus subtilis (strain 168).